Here is a 225-residue protein sequence, read N- to C-terminus: Putative tyrosine-protein phosphatase OCA1 (225 aa).

Residues 1-11 are compositionally biased toward acidic residues; the sequence is MTDNCREDDDN. Residues 1–24 form a disordered region; the sequence is MTDNCREDDDNLGTSGDNALSAPT. Residues 12–24 are compositionally biased toward polar residues; sequence LGTSGDNALSAPT. A Tyrosine-protein phosphatase domain is found at 42–196; the sequence is NFCPVERYLY…FDTKSVTIDK (155 aa). Cys138 (phosphocysteine intermediate) is an active-site residue.

It belongs to the protein-tyrosine phosphatase family.

Its subcellular location is the cytoplasm. The catalysed reaction is O-phospho-L-tyrosyl-[protein] + H2O = L-tyrosyl-[protein] + phosphate. Putative tyrosine-protein phosphatase required for protection against superoxide stress. The sequence is that of Putative tyrosine-protein phosphatase OCA1 (OCA1) from Eremothecium gossypii (strain ATCC 10895 / CBS 109.51 / FGSC 9923 / NRRL Y-1056) (Yeast).